A 292-amino-acid chain; its full sequence is Small ribosomal subunit protein uS2 (292 aa).

The disordered stretch occupies residues 230–292 (RSGGAPGSEK…KKEAGSGEEA (63 aa)). 2 stretches are compositionally biased toward basic and acidic residues: residues 247–259 (EWER…KTEA) and 271–292 (PAKE…GEEA).

This sequence belongs to the universal ribosomal protein uS2 family.

This chain is Small ribosomal subunit protein uS2, found in Thermobifida fusca (strain YX).